We begin with the raw amino-acid sequence, 692 residues long: Sodium- and chloride-dependent glycine transporter 1 (692 aa).

The disordered stretch occupies residues Met-1–Thr-34. The Cytoplasmic segment spans residues Met-1 to Glu-94. 3 helical membrane-spanning segments follow: residues Phe-95–Leu-115, Gly-122–Met-142, and Val-174–Phe-194. Residues Ser-195–Glu-271 are Extracellular-facing. 9 helical membrane passes run Val-272–Ile-292, Val-301–Val-321, Val-346–Ile-366, Ser-393–Val-413, Leu-436–Leu-456, Val-492–Leu-512, Tyr-516–Ile-536, Leu-556–Phe-576, and Val-596–Phe-616. Residues Gln-617–Ile-692 lie on the Cytoplasmic side of the membrane. Thr-657 bears the Phosphothreonine mark. A phosphoserine mark is found at Ser-659 and Ser-684. Positions Ser-681 to Ile-692 are essential for interaction with EXOC1.

The protein belongs to the sodium:neurotransmitter symporter (SNF) (TC 2.A.22) family. SLC6A9 subfamily. Interacts with EXOC1; interaction increases the transporter capacity of SLC6A9 probably by promoting its insertion into the cell membrane. Interacts with EXOC3 and EXOC4. In terms of tissue distribution, expressed in the brain (at protein level). At 11 dpc, expressed in the ventral part of the ventricular zone. At 15 dpc, also expressed in adjacent mantle tissue and the meninges. Strongly expressed in 12 dpc and 15 dpc liver. Expressed in the brain.

It is found in the cell membrane. It catalyses the reaction glycine(out) + chloride(out) + 2 Na(+)(out) = glycine(in) + chloride(in) + 2 Na(+)(in). In terms of biological role, sodium- and chloride-dependent glycine transporter which is essential for regulating glycine concentrations at inhibitory glycinergic synapses. Functionally, sodium- and chloride-dependent glycine transporter. The polypeptide is Sodium- and chloride-dependent glycine transporter 1 (Slc6a9) (Mus musculus (Mouse)).